A 207-amino-acid chain; its full sequence is Uracil phosphoribosyltransferase (207 aa).

5-phospho-alpha-D-ribose 1-diphosphate contacts are provided by residues Arg-77, Arg-102, and 129–137 (DPMLATGGS). Uracil is bound by residues Ile-192 and 197–199 (GDA). Position 198 (Asp-198) interacts with 5-phospho-alpha-D-ribose 1-diphosphate.

It belongs to the UPRTase family. Mg(2+) serves as cofactor.

The enzyme catalyses UMP + diphosphate = 5-phospho-alpha-D-ribose 1-diphosphate + uracil. The protein operates within pyrimidine metabolism; UMP biosynthesis via salvage pathway; UMP from uracil: step 1/1. Its activity is regulated as follows. Allosterically activated by GTP. In terms of biological role, catalyzes the conversion of uracil and 5-phospho-alpha-D-ribose 1-diphosphate (PRPP) to UMP and diphosphate. The protein is Uracil phosphoribosyltransferase of Nocardia farcinica (strain IFM 10152).